The sequence spans 107 residues: uncharacterized protein (107 aa).

The span at 88–97 (EEKKEKDKGK) shows a compositional bias: basic and acidic residues. Residues 88–107 (EEKKEKDKGKKGLLSRLKFW) form a disordered region. The segment covering 98–107 (KGLLSRLKFW) has biased composition (basic residues).

This is an uncharacterized protein from Methanocaldococcus jannaschii (strain ATCC 43067 / DSM 2661 / JAL-1 / JCM 10045 / NBRC 100440) (Methanococcus jannaschii).